The following is a 50-amino-acid chain: Large ribosomal subunit protein bL33 (50 aa).

Belongs to the bacterial ribosomal protein bL33 family.

The chain is Large ribosomal subunit protein bL33 (rpmG) from Aquifex aeolicus (strain VF5).